A 103-amino-acid polypeptide reads, in one-letter code: Serine rich endogenous peptide 9 (103 aa).

Residues 1 to 25 form the signal peptide; it reads MENIFFSKLTQVFIVALLCIFIYRT. Positions 54-103 are disordered; it reads IYVKPPPLKSKDSNQKGKRGETYYKPNSEIGTGPSHSGHGGSSIEHVSSP. The span at 62–75 shows a compositional bias: basic and acidic residues; that stretch reads KSKDSNQKGKRGET. An SCOOP motif motif is present at residues 82-96; it reads EIGTGPSHSGHGGSS. Positions 84 to 103 are enriched in low complexity; the sequence is GTGPSHSGHGGSSIEHVSSP. Positions 88–90 match the SxS motif essential for MIK2 binding motif; sequence SHS.

This sequence belongs to the serine rich endogenous peptide (SCOOP) phytocytokine family. As to quaternary structure, interacts with MIK2 (via extracellular leucine-rich repeat domain); this interaction triggers the formation of complex between MIK2 and the BAK1/SERK3 and SERK4 coreceptors, and subsequent BAK1 activation by phosphorylation. As to expression, mostly expressed in seedlings shoots and roots, and, to a lower extent, in leaves, but barely in flowers.

It is found in the cell membrane. The protein localises to the secreted. The protein resides in the extracellular space. Its subcellular location is the apoplast. Brassicaceae-specific phytocytokine (plant endogenous peptide released into the apoplast) perceived by MIK2 in a BAK1/SERK3 and SERK4 coreceptors-dependent manner, that modulates various physiological and antimicrobial processes including growth prevention and reactive oxygen species (ROS) response regulation. The sequence is that of Serine rich endogenous peptide 9 from Arabidopsis thaliana (Mouse-ear cress).